Consider the following 535-residue polypeptide: Large neutral amino acids transporter small subunit 2 (535 aa).

The span at 1–17 (MEEGARHRNNTEKKHPG) shows a compositional bias: basic and acidic residues. The disordered stretch occupies residues 1-30 (MEEGARHRNNTEKKHPGGGESDASPEAGSG). Topologically, residues 1 to 44 (MEEGARHRNNTEKKHPGGGESDASPEAGSGGGGVALKKEIGLVS) are cytoplasmic. Position 29 is a phosphoserine (Ser-29). Residues 45-65 (ACGIIVGNIIGSGIFVSPKGV) traverse the membrane as a helical segment. L-leucine is bound at residue Ile-53. At 66 to 73 (LENAGSVG) the chain is on the extracellular side. The chain crosses the membrane as a helical span at residues 74-95 (LALIVWIVTGFITVVGALCYAE). Residues 96–116 (LGVTIPKSGGDYSYVKDIFGG) lie on the Cytoplasmic side of the membrane. Residues 117–149 (LAGFLRLWIAVLVIYPTNQAVIALTFSNYVLQP) traverse the membrane as a helical segment. Asn-134 contacts L-tryptophan. Over 150-157 (LFPTCFPP) the chain is Extracellular. Residues 158–178 (ESGLRLLAAICLLLLTWVNCS) traverse the membrane as a helical segment. Topologically, residues 179–181 (SVR) are cytoplasmic. A helical membrane pass occupies residues 182 to 210 (WATRVQDIFTAGKLLALALIIIMGIVQIC). The Extracellular portion of the chain corresponds to 211-230 (KGEYFWLEPKNAFENFQEPD). The chain crosses the membrane as a helical span at residues 231 to 252 (IGLVALAFLQGSFAYGGWNFLN). Gly-246 lines the L-leucine pocket. Residues 253 to 265 (YVTEELVDPYKNL) are Cytoplasmic-facing. Residues 266–287 (PRAIFISIPLVTFVYVFANVAY) traverse the membrane as a helical segment. Over 288 to 312 (VTAMSPQELLASNAVAVTFGEKLLG) the chain is Extracellular. The helical transmembrane segment at 313-338 (VMAWIMPISVALSTFGGVNGSLFTSS) threads the bilayer. Over 339–364 (RLFFAGAREGHLPSVLAMIHVKRCTP) the chain is Cytoplasmic. The chain crosses the membrane as a helical span at residues 365–382 (IPALLFTCISTLLMLVTS). The Extracellular segment spans residues 383–386 (DMYT). Residues 387 to 408 (LINYVGFINYLFYGVTVAGQIV) form a helical membrane-spanning segment. Residue Asn-395 coordinates L-tryptophan. At 409–423 (LRWKKPDIPRPIKIN) the chain is on the cytoplasmic side. The next 2 helical transmembrane spans lie at 424–446 (LLFP…WSEP) and 447–466 (VVCG…YFLG). Residues 467 to 535 (VYWQHKPKCF…DKDVAGQPQP (69 aa)) are Cytoplasmic-facing. The tract at residues 502-535 (SGTEEANEDMEEQQQPMYQPTPTKDKDVAGQPQP) is disordered. Residues 514–523 (QQQPMYQPTP) are compositionally biased toward polar residues.

This sequence belongs to the amino acid-polyamine-organocation (APC) superfamily. L-type amino acid transporter (LAT) (TC 2.A.3.8) family. Disulfide-linked heterodimer composed of the catalytic light chain subunit SLC7A8 and the heavy chain subunit SLC3A2. SLC3A2 acts as chaperones for correct plasma membrane trafficking and stabilization of SLC7A8 and modulates the substrate affinity and specificity of SLC7A8. ICAM-1 associates with the heterodimer SLC3A2/SLC7A8; this interaction regulates SLC7A8 activity. Strongest expression is observed in kidney and moderate expression in placenta and brain, followed by liver, prostate, testis, ovary, lymph node, thymus, spleen, skeletal muscle and heart. Also expressed in fetal liver as well as in the retinal pigment epithelial cell line ARPE-19 and the intestinal epithelial cell line Caco-2.

The protein resides in the cell membrane. It is found in the basolateral cell membrane. The enzyme catalyses L-histidine(in) + L-phenylalanine(out) = L-histidine(out) + L-phenylalanine(in). It carries out the reaction L-tryptophan(in) + L-phenylalanine(out) = L-tryptophan(out) + L-phenylalanine(in). It catalyses the reaction L-isoleucine(in) + L-phenylalanine(out) = L-isoleucine(out) + L-phenylalanine(in). The catalysed reaction is L-valine(in) + L-phenylalanine(out) = L-valine(out) + L-phenylalanine(in). The enzyme catalyses L-leucine(in) + L-phenylalanine(out) = L-leucine(out) + L-phenylalanine(in). It carries out the reaction L-glutamine(in) + L-phenylalanine(out) = L-glutamine(out) + L-phenylalanine(in). It catalyses the reaction L-cysteine(in) + L-phenylalanine(out) = L-cysteine(out) + L-phenylalanine(in). The catalysed reaction is L-phenylalanine(out) + L-methionine(in) = L-phenylalanine(in) + L-methionine(out). The enzyme catalyses L-leucine(out) + L-methionine(in) = L-leucine(in) + L-methionine(out). It carries out the reaction L-cysteine(out) + L-methionine(in) = L-cysteine(in) + L-methionine(out). It catalyses the reaction S-methylmercury-L-cysteine(out) + L-methionine(in) = S-methylmercury-L-cysteine(in) + L-methionine(out). The catalysed reaction is S-methylmercury-L-cysteine(in) + L-leucine(out) = S-methylmercury-L-cysteine(out) + L-leucine(in). The enzyme catalyses S-methylmercury-L-cysteine(in) + L-phenylalanine(out) = S-methylmercury-L-cysteine(out) + L-phenylalanine(in). It carries out the reaction L-phenylalanine(out) + L-serine(in) = L-phenylalanine(in) + L-serine(out). It catalyses the reaction L-phenylalanine(out) + glycine(in) = L-phenylalanine(in) + glycine(out). The catalysed reaction is L-phenylalanine(out) + L-alanine(in) = L-phenylalanine(in) + L-alanine(out). The enzyme catalyses 3,3'-diiodo-L-thyronine(out) = 3,3'-diiodo-L-thyronine(in). It carries out the reaction 3,3',5-triiodo-L-thyronine(out) = 3,3',5-triiodo-L-thyronine(in). It catalyses the reaction L-dopa(out) + L-phenylalanine(in) = L-dopa(in) + L-phenylalanine(out). Its activity is regulated as follows. Inhibited by the L-type inhibitor 2-Aminobicyclo-(2,2,1)-heptane-2-carboxylic acid (BCH). Functionally, associates with SLC3A2 to form a functional heterodimeric complex that translocates small and large neutral amino acids with broad specificity and a stoichiometry of 1:1. Functions as amino acid antiporter mediating the influx of extracellular essential amino acids mainly in exchange with the efflux of highly concentrated intracellular amino acids. Has relatively symmetrical selectivities but strongly asymmetrical substrate affinities at both the intracellular and extracellular sides of the transporter. This asymmetry allows SLC7A8 to regulate intracellular amino acid pools (mM concentrations) by exchange with external amino acids (uM concentration range), equilibrating the relative concentrations of different amino acids across the plasma membrane instead of mediating their net uptake. May play an essential role in the reabsorption of neutral amino acids from the epithelial cells to the bloodstream in the kidney. Involved in the uptake of methylmercury (MeHg) when administered as the L-cysteine or D,L-homocysteine complexes, and hence plays a role in metal ion homeostasis and toxicity. Involved in the cellular activity of small molecular weight nitrosothiols, via the stereoselective transport of L-nitrosocysteine (L-CNSO) across the transmembrane. Imports the thyroid hormone diiodothyronine (T2) and to a smaller extent triiodothyronine (T3) but not rT 3 or thyroxine (T4). Mediates the uptake of L-DOPA. May participate in auditory function. This Homo sapiens (Human) protein is Large neutral amino acids transporter small subunit 2.